The following is a 577-amino-acid chain: Proton channel OTOP3 (577 aa).

The disordered stretch occupies residues 1-46 (MASQTSAPAEPAPMPSPEAKTTEGASSYDQADMETKHAGSPCPPKQ). Over 1–69 (MASQTSAPAE…RDRQAQKAGQ (69 aa)) the chain is Cytoplasmic. A helical transmembrane segment spans residues 70–90 (LFSGLLALNVVFLGGAFICSM). At 91–100 (IFNKVSVTLG) the chain is on the extracellular side. A helical transmembrane segment spans residues 101 to 124 (DVWILLAALKVLSLLWLLYYTVGT). Over 125 to 140 (TRKPHAVLYRDPHAGP) the chain is Cytoplasmic. A helical transmembrane segment spans residues 141–162 (IWVRGSLVLFGSCTVCLNIFRM). Topologically, residues 163 to 174 (GYDVSHIHCKSE) are extracellular. The chain crosses the membrane as a helical span at residues 175 to 198 (VELIFPAIEIVFMIIQTWVLWRHC). Residues 199–206 (KDCVQVQT) lie on the Cytoplasmic side of the membrane. The chain crosses the membrane as a helical span at residues 207–229 (NFTRCGLMLTLATNLLMWVLAVT). Topologically, residues 230–276 (NDSMHREIEAELDALMEKFSGNGTNTCMCLNTTVCEVFRKGYLMLYP) are extracellular. A helical transmembrane segment spans residues 277-293 (FSTEYCLICCAVLFVMW). Residues 294 to 319 (KNVSRSLAAHTGAHPNRSPFRLHGTI) lie on the Cytoplasmic side of the membrane. The helical transmembrane segment at 320–339 (FGPLLGLLALVAGVCVFVLF) threads the bilayer. The Extracellular segment spans residues 340–353 (QIEASGPDIARQYF). A helical transmembrane segment spans residues 354 to 376 (TLYYAFYVAVLPTMSLACLAGTA). Topologically, residues 377-394 (IHGLEERELDTLKNPTRS) are cytoplasmic. A helical transmembrane segment spans residues 395 to 416 (LDVVLLMGAALGQMGIAYFSIV). The Extracellular portion of the chain corresponds to 417-427 (AIVATQPHELL). The helical transmembrane segment at 428–450 (NQLILAYSLLLILQHITQNLFII) threads the bilayer. Residues 451–510 (EGLHRRPLWEPAVSGVMEKQDVELPRRGSLRELGQDLRRASRAYIHSFSHLNWKRRMLKE) lie on the Cytoplasmic side of the membrane. A helical transmembrane segment spans residues 511–528 (ISLFLILCNITLWMMPAF). The Extracellular portion of the chain corresponds to 529 to 547 (GIHPEFENGLEKDFYGYRT). Residues 548–570 (WFTIVNFGLPLGVFYRMHSVGGL) form a helical membrane-spanning segment. Residues 571–577 (VEVYLGA) are Cytoplasmic-facing.

This sequence belongs to the otopetrin family. As to quaternary structure, homodimer. In terms of tissue distribution, expressed in epidermis, small intestine, stomach and retina.

The protein resides in the cell membrane. The enzyme catalyses H(+)(in) = H(+)(out). With respect to regulation, activated by extracellular acidification. Activated by Zn(2+) under non-acidic conditions. Proton-selective channel gated by extracellular protons. This is Proton channel OTOP3 from Mus musculus (Mouse).